The sequence spans 365 residues: tRNA-specific 2-thiouridylase MnmA (365 aa).

ATP-binding positions include 6 to 13 (AMSGGVDS) and leucine 32. The active-site Nucleophile is cysteine 101. A disulfide bridge links cysteine 101 with cysteine 199. Glycine 125 serves as a coordination point for ATP. The tract at residues 149–151 (KDQ) is interaction with tRNA. Cysteine 199 functions as the Cysteine persulfide intermediate in the catalytic mechanism.

This sequence belongs to the MnmA/TRMU family.

The protein resides in the cytoplasm. The catalysed reaction is S-sulfanyl-L-cysteinyl-[protein] + uridine(34) in tRNA + AH2 + ATP = 2-thiouridine(34) in tRNA + L-cysteinyl-[protein] + A + AMP + diphosphate + H(+). Catalyzes the 2-thiolation of uridine at the wobble position (U34) of tRNA, leading to the formation of s(2)U34. In Corynebacterium glutamicum (strain R), this protein is tRNA-specific 2-thiouridylase MnmA.